A 315-amino-acid chain; its full sequence is DNA-directed RNA polymerase subunit alpha (315 aa).

Residues 1–228 are alpha N-terminal domain (alpha-NTD); that stretch reads MIGMEKPKIE…EHLELFISLT (228 aa). The segment at 245–315 is alpha C-terminal domain (alpha-CTD); sequence RNKLMEMTIE…FGLSLRQPDD (71 aa).

Belongs to the RNA polymerase alpha chain family. Homodimer. The RNAP catalytic core consists of 2 alpha, 1 beta, 1 beta' and 1 omega subunit. When a sigma factor is associated with the core the holoenzyme is formed, which can initiate transcription.

It catalyses the reaction RNA(n) + a ribonucleoside 5'-triphosphate = RNA(n+1) + diphosphate. DNA-dependent RNA polymerase catalyzes the transcription of DNA into RNA using the four ribonucleoside triphosphates as substrates. This is DNA-directed RNA polymerase subunit alpha from Symbiobacterium thermophilum (strain DSM 24528 / JCM 14929 / IAM 14863 / T).